Consider the following 289-residue polypeptide: 33 kDa chaperonin (289 aa).

2 disulfide bridges follow: cysteine 235/cysteine 237 and cysteine 268/cysteine 271.

Belongs to the HSP33 family. In terms of processing, under oxidizing conditions two disulfide bonds are formed involving the reactive cysteines. Under reducing conditions zinc is bound to the reactive cysteines and the protein is inactive.

It localises to the cytoplasm. Its function is as follows. Redox regulated molecular chaperone. Protects both thermally unfolding and oxidatively damaged proteins from irreversible aggregation. Plays an important role in the bacterial defense system toward oxidative stress. This chain is 33 kDa chaperonin, found in Bacillus licheniformis (strain ATCC 14580 / DSM 13 / JCM 2505 / CCUG 7422 / NBRC 12200 / NCIMB 9375 / NCTC 10341 / NRRL NRS-1264 / Gibson 46).